The primary structure comprises 379 residues: Mating-type protein MAT-1 (379 aa).

Positions 60-117 (RARKALNAFVRFRCYYVAIPMFKQWPMKKLSNLIGLLWEADPNKSLWSLMTKAWSTIR) form a DNA-binding region, alpha box.

This sequence belongs to the MATALPHA1 family.

The protein localises to the nucleus. Its function is as follows. Mating type proteins are sequence specific DNA-binding proteins that act as master switches in fungal differentiation by controlling gene expression in a cell type-specific fashion. Transcriptional activator that induces the transcription of alpha-specific genes. This Curvularia kusanoi (Cochliobolus kusanoi) protein is Mating-type protein MAT-1 (MAT1).